Here is a 104-residue protein sequence, read N- to C-terminus: Large ribosomal subunit protein uL24 (104 aa).

Belongs to the universal ribosomal protein uL24 family. As to quaternary structure, part of the 50S ribosomal subunit.

Its function is as follows. One of two assembly initiator proteins, it binds directly to the 5'-end of the 23S rRNA, where it nucleates assembly of the 50S subunit. One of the proteins that surrounds the polypeptide exit tunnel on the outside of the subunit. The chain is Large ribosomal subunit protein uL24 from Anaplasma phagocytophilum (strain HZ).